The chain runs to 437 residues: MAAQAAPAEELSKLSVDETKPAPAAANGNDSDAESGDEEAEEGAAAPAAGAAKKKKKRKPKKKKKAPTSQSEPPRVLVSQLFPNNQYPKGEEVEYVNDNLNRVTNEEKRHLDNLNQEFLTDYRHAAEVHRQVRQWAQKSIKPGQTLTEIAENIEDSVRALTGHSGLEEGDALIAGMGFPTGLSINHCAAHYTPNAGNKMVLQEDDVMKVDFGVHVNGRIVDSAFTVAFNPRYDPLLEAVKAATNAGIKEAGIDVRVGDIGAAIQEVMESYEVEINGQMLPVKSIRNLNGHTINHYSIHGTKSVPIVKSNDQTKMEEGDVFAIETFGSTGNGYVHEEGEVSHYAKRGDAAKVDLRLSSAKSLLNVITKNFGTLPFCRRYIDRLGQDKYLLGLNNLVSQGIVEAYPPLVDKKGSYTAQYEHTILLRPTVKEVISRGDDF.

Positions 1–90 are disordered; sequence MAAQAAPAEE…LFPNNQYPKG (90 aa). The segment covering 10-20 has biased composition (basic and acidic residues); sequence ELSKLSVDETK. The span at 31–42 shows a compositional bias: acidic residues; it reads SDAESGDEEAEE. Over residues 52-66 the composition is skewed to basic residues; it reads AKKKKKRKPKKKKKA. His-190 is a substrate binding site. Residues Asp-210, Asp-221, and His-290 each contribute to the a divalent metal cation site. His-298 is a binding site for substrate. Positions 323 and 418 each coordinate a divalent metal cation.

Belongs to the peptidase M24A family. Methionine aminopeptidase eukaryotic type 2 subfamily. The cofactor is Co(2+). It depends on Zn(2+) as a cofactor. Mn(2+) serves as cofactor. Fe(2+) is required as a cofactor.

The protein resides in the cytoplasm. The catalysed reaction is Release of N-terminal amino acids, preferentially methionine, from peptides and arylamides.. In terms of biological role, cotranslationally removes the N-terminal methionine from nascent proteins. The N-terminal methionine is often cleaved when the second residue in the primary sequence is small and uncharged (Met-Ala-, Cys, Gly, Pro, Ser, Thr, or Val). The chain is Methionine aminopeptidase 2 from Neurospora crassa (strain ATCC 24698 / 74-OR23-1A / CBS 708.71 / DSM 1257 / FGSC 987).